A 146-amino-acid polypeptide reads, in one-letter code: Hemoglobin subunit beta (146 aa).

Valine 1 carries the post-translational modification N-acetylvaline. The region spanning 2–146 (HLSGEEKAAV…VANALAHKYH (145 aa)) is the Globin domain. Threonine 12 bears the Phosphothreonine mark. Residue serine 44 is modified to Phosphoserine. N6-acetyllysine is present on lysine 59. Position 63 (histidine 63) interacts with heme b. Lysine 82 bears the N6-acetyllysine mark. Histidine 92 contributes to the heme b binding site. Cysteine 93 carries the post-translational modification S-nitrosocysteine. An N6-acetyllysine modification is found at lysine 144.

Belongs to the globin family. Heterotetramer of two alpha chains and two beta chains. As to expression, red blood cells.

In terms of biological role, involved in oxygen transport from the lung to the various peripheral tissues. The protein is Hemoglobin subunit beta (HBB) of Pteropus alecto (Black flying fox).